The primary structure comprises 57 residues: U-Asilidin(1)-Mar2a (57 aa).

The first 24 residues, 1–24 (MAPLLKLNILLLIVLICFTFHANA), serve as a signal peptide directing secretion. 3 disulfide bridges follow: Cys-28–Cys-44, Cys-35–Cys-48, and Cys-43–Cys-53.

The protein belongs to the asilidin-1 family. Expressed by the venom gland. Exclusively expressed in the venom thoracic glands (and not in body tissues).

It localises to the secreted. Functionally, may act as a neurotoxin. The polypeptide is U-Asilidin(1)-Mar2a (Machimus arthriticus (Breck robberfly)).